Here is a 290-residue protein sequence, read N- to C-terminus: 33 kDa chaperonin (290 aa).

Intrachain disulfides connect Cys235-Cys237 and Cys268-Cys271.

The protein belongs to the HSP33 family. In terms of processing, under oxidizing conditions two disulfide bonds are formed involving the reactive cysteines. Under reducing conditions zinc is bound to the reactive cysteines and the protein is inactive.

The protein localises to the cytoplasm. Functionally, redox regulated molecular chaperone. Protects both thermally unfolding and oxidatively damaged proteins from irreversible aggregation. Plays an important role in the bacterial defense system toward oxidative stress. In Streptococcus pyogenes serotype M18 (strain MGAS8232), this protein is 33 kDa chaperonin.